The sequence spans 250 residues: Probable aquaporin TIP-type RB7-18C (250 aa).

The next 2 membrane-spanning stretches (helical) occupy residues 20 to 42 (AYVAEFIATLLFVFAGVGSAIAY) and 55 to 77 (GLVAVAVAHAFALFVGVSIAANI). The NPA 1 motif lies at 83 to 85 (NPA). The next 3 membrane-spanning stretches (helical) occupy residues 97–119 (TILTGFFYWIAQLLGSTVACLLL), 140–162 (FQGVVMEIIITFALVYTVYATAA), and 172–194 (IAPIAIGFIVGANILAAGPFSGG). An NPA 2 motif is present at residues 197–199 (NPA). Residues 215–237 (WIYWAGPLIGGGLAGFIYGDVFI) form a helical membrane-spanning segment.

It belongs to the MIP/aquaporin (TC 1.A.8) family. TIP (TC 1.A.8.10) subfamily. As to expression, roots.

The protein localises to the vacuole membrane. In terms of biological role, channel protein in tonoplast. These proteins may allow the diffusion of amino acids and/or peptides from the vacuolar compartment to the cytoplasm. This Nicotiana tabacum (Common tobacco) protein is Probable aquaporin TIP-type RB7-18C.